The primary structure comprises 853 residues: DNA mismatch repair protein MutS (853 aa).

Gly-614–Ser-621 contacts ATP.

It belongs to the DNA mismatch repair MutS family.

Functionally, this protein is involved in the repair of mismatches in DNA. It is possible that it carries out the mismatch recognition step. This protein has a weak ATPase activity. This is DNA mismatch repair protein MutS from Escherichia coli (strain SMS-3-5 / SECEC).